A 487-amino-acid polypeptide reads, in one-letter code: NADH-quinone oxidoreductase subunit N (487 aa).

A run of 14 helical transmembrane segments spans residues 16–36, 45–65, 79–99, 111–131, 133–153, 168–188, 212–232, 257–276, 281–298, 306–326, 333–353, 378–398, 413–435, and 457–477; these read VIMPEVILSVLGMALLLVNVF, LAWLSLIGIVGAGFAAVTGWG, NFAIFFKIIFLLAAGLAVLIS, GELYPIILFTTVGMMLMAAAT, LMTIFLGLELMSISLYVLAGF, FLLGAFSTGFLLYGMALIYGV, LLIGMFLMLTGFLFKIAAAPF, AAGFAAMLRLLLVAFPAMIA, LLWILAVLTMTVGNFTAL, MLAYSSIAHAGYCLVGFASGT, ILFYMLSYTFMNIGAFAVIVL, ALAMTVFMFSLAGMPPTAGFI, IWLAIIGVLNSAASVYYYLRVIV, and LALVVSAAGSLIPGIIPSMIL.

Belongs to the complex I subunit 2 family. In terms of assembly, NDH-1 is composed of 14 different subunits. Subunits NuoA, H, J, K, L, M, N constitute the membrane sector of the complex.

Its subcellular location is the cell inner membrane. The catalysed reaction is a quinone + NADH + 5 H(+)(in) = a quinol + NAD(+) + 4 H(+)(out). NDH-1 shuttles electrons from NADH, via FMN and iron-sulfur (Fe-S) centers, to quinones in the respiratory chain. The immediate electron acceptor for the enzyme in this species is believed to be ubiquinone. Couples the redox reaction to proton translocation (for every two electrons transferred, four hydrogen ions are translocated across the cytoplasmic membrane), and thus conserves the redox energy in a proton gradient. In Trichlorobacter lovleyi (strain ATCC BAA-1151 / DSM 17278 / SZ) (Geobacter lovleyi), this protein is NADH-quinone oxidoreductase subunit N.